The following is a 465-amino-acid chain: MKVGFISLGCPKNLVDSEVMMGQLVAKGHELTSHPDQADVLVVNTCSFIDPAKKESVDTILEMAEYKKIGRAKKLIVAGCLVERYRGDIRTEMPEVDALIGTNELDSIVDICEGMPPSTNPLEPYLYHDLTPRVLATPRHFAYMKIAEGCDHPCTFCVIPQYRGAFRSRRFESVVSEATRLFQQGIREINLIGQDTTCYGEDLGLKDGLAELLARLAQIETPQEKWIRFLYAYPNKVTQKLLDTLAEHAALAKYIDMPLQHASANVLKRMKRGASGDIFLKLIERIRRTIPGVAIRTSFIVGFPGETAADFDELCAFVEAAKFDNLGVFTYSDEDTSASYALDGKVDGRTIQNRKRRLMAIQRKIARARNRGLVGKEVPVLVSGVSGETDLLWEARMSTQAPEIDGVTLINDFEGSEPRAGEIRRLRITEAHDYDVVGTLLAPTEPAPVLPAGPGLINIESLVAV.

An MTTase N-terminal domain is found at 1-117 (MKVGFISLGC…IVDICEGMPP (117 aa)). [4Fe-4S] cluster contacts are provided by C10, C46, C80, C150, C154, and C157. Positions 136–369 (ATPRHFAYMK…AIQRKIARAR (234 aa)) constitute a Radical SAM core domain. The 72-residue stretch at 371 to 442 (RGLVGKEVPV…DYDVVGTLLA (72 aa)) folds into the TRAM domain.

It belongs to the methylthiotransferase family. RimO subfamily. [4Fe-4S] cluster is required as a cofactor.

It is found in the cytoplasm. The enzyme catalyses L-aspartate(89)-[ribosomal protein uS12]-hydrogen + (sulfur carrier)-SH + AH2 + 2 S-adenosyl-L-methionine = 3-methylsulfanyl-L-aspartate(89)-[ribosomal protein uS12]-hydrogen + (sulfur carrier)-H + 5'-deoxyadenosine + L-methionine + A + S-adenosyl-L-homocysteine + 2 H(+). Catalyzes the methylthiolation of an aspartic acid residue of ribosomal protein uS12. The sequence is that of Ribosomal protein uS12 methylthiotransferase RimO from Solibacter usitatus (strain Ellin6076).